A 439-amino-acid polypeptide reads, in one-letter code: Histidine--tRNA ligase (439 aa).

Belongs to the class-II aminoacyl-tRNA synthetase family. In terms of assembly, homodimer.

It is found in the cytoplasm. It catalyses the reaction tRNA(His) + L-histidine + ATP = L-histidyl-tRNA(His) + AMP + diphosphate + H(+). The protein is Histidine--tRNA ligase of Clostridium tetani (strain Massachusetts / E88).